Consider the following 416-residue polypeptide: Probable cysteine desulfurase (416 aa).

Lysine 236 is modified (N6-(pyridoxal phosphate)lysine). Cysteine 374 (cysteine persulfide intermediate) is an active-site residue.

This sequence belongs to the class-V pyridoxal-phosphate-dependent aminotransferase family. Csd subfamily. Requires pyridoxal 5'-phosphate as cofactor.

The catalysed reaction is (sulfur carrier)-H + L-cysteine = (sulfur carrier)-SH + L-alanine. Its function is as follows. Catalyzes the removal of elemental sulfur and selenium atoms from L-cysteine, L-cystine, L-selenocysteine, and L-selenocystine to produce L-alanine. The polypeptide is Probable cysteine desulfurase (csd) (Xylella fastidiosa (strain 9a5c)).